Reading from the N-terminus, the 373-residue chain is Phospho-N-acetylmuramoyl-pentapeptide-transferase (373 aa).

Helical transmembrane passes span W16–F36, L46–I66, P93–V113, Q120–W140, L157–I177, L185–A205, L216–M236, G242–M262, V270–L290, L298–F318, and M350–L369.

Belongs to the glycosyltransferase 4 family. MraY subfamily. It depends on Mg(2+) as a cofactor.

It is found in the cell inner membrane. It catalyses the reaction UDP-N-acetyl-alpha-D-muramoyl-L-alanyl-gamma-D-glutamyl-meso-2,6-diaminopimeloyl-D-alanyl-D-alanine + di-trans,octa-cis-undecaprenyl phosphate = di-trans,octa-cis-undecaprenyl diphospho-N-acetyl-alpha-D-muramoyl-L-alanyl-D-glutamyl-meso-2,6-diaminopimeloyl-D-alanyl-D-alanine + UMP. The protein operates within cell wall biogenesis; peptidoglycan biosynthesis. Functionally, catalyzes the initial step of the lipid cycle reactions in the biosynthesis of the cell wall peptidoglycan: transfers peptidoglycan precursor phospho-MurNAc-pentapeptide from UDP-MurNAc-pentapeptide onto the lipid carrier undecaprenyl phosphate, yielding undecaprenyl-pyrophosphoryl-MurNAc-pentapeptide, known as lipid I. This chain is Phospho-N-acetylmuramoyl-pentapeptide-transferase, found in Prochlorococcus marinus (strain MIT 9313).